The following is a 139-amino-acid chain: Small ribosomal subunit protein uS11 (139 aa).

A disordered region spans residues 118–139 (EDVTPIPHDGTRPKGGRRGRRV).

The protein belongs to the universal ribosomal protein uS11 family. Part of the 30S ribosomal subunit.

Functionally, located on the platform of the 30S subunit. The protein is Small ribosomal subunit protein uS11 of Thermococcus sibiricus (strain DSM 12597 / MM 739).